The sequence spans 214 residues: Orotate phosphoribosyltransferase (214 aa).

Residue lysine 26 participates in 5-phospho-alpha-D-ribose 1-diphosphate binding. Residue 34-35 (FF) coordinates orotate. 5-phospho-alpha-D-ribose 1-diphosphate is bound by residues 72 to 73 (YK), arginine 99, lysine 100, lysine 103, histidine 105, and 124 to 132 (DDVITAGTA). Residues threonine 128 and arginine 157 each contribute to the orotate site.

This sequence belongs to the purine/pyrimidine phosphoribosyltransferase family. PyrE subfamily. As to quaternary structure, homodimer. It depends on Mg(2+) as a cofactor.

It catalyses the reaction orotidine 5'-phosphate + diphosphate = orotate + 5-phospho-alpha-D-ribose 1-diphosphate. It functions in the pathway pyrimidine metabolism; UMP biosynthesis via de novo pathway; UMP from orotate: step 1/2. Functionally, catalyzes the transfer of a ribosyl phosphate group from 5-phosphoribose 1-diphosphate to orotate, leading to the formation of orotidine monophosphate (OMP). This chain is Orotate phosphoribosyltransferase, found in Pseudomonas fluorescens (strain SBW25).